The sequence spans 423 residues: Pre-mRNA-splicing regulator WTAP (423 aa).

Positions 234–423 (QQLSQMNQTQ…TSNASAGSVL (190 aa)) are disordered. 4 stretches are compositionally biased toward polar residues: residues 239 to 276 (MNQT…SSNV), 285 to 301 (NGPS…SGSS), 358 to 377 (DSPT…TDSN), and 392 to 404 (TAGT…NGLD). Low complexity predominate over residues 405 to 423 (SSAAAVATNTSNASAGSVL).

This sequence belongs to the fl(2)d family. Component of the WMM complex, a N6-methyltransferase complex composed of a catalytic subcomplex, named MAC, and of an associated subcomplex, named MACOM. Component of the MACOM subcomplex.

It is found in the nucleus speckle. Its subcellular location is the nucleus. It localises to the nucleoplasm. Its function is as follows. Associated component of the WMM complex, a complex that mediates N6-methyladenosine (m6A) methylation of RNAs, a modification that plays a role in the efficiency of mRNA splicing and RNA processing. The sequence is that of Pre-mRNA-splicing regulator WTAP from Danio rerio (Zebrafish).